Consider the following 152-residue polypeptide: Large-conductance mechanosensitive channel (152 aa).

Transmembrane regions (helical) follow at residues Val14–Leu34 and Val84–Leu104.

This sequence belongs to the MscL family. Homopentamer.

Its subcellular location is the cell inner membrane. Functionally, channel that opens in response to stretch forces in the membrane lipid bilayer. May participate in the regulation of osmotic pressure changes within the cell. The protein is Large-conductance mechanosensitive channel of Laribacter hongkongensis (strain HLHK9).